A 380-amino-acid chain; its full sequence is uncharacterized protein (380 aa).

The 32-residue stretch at 287-318 folds into the 4Fe-4S ferredoxin-type domain; the sequence is LRPKIYQDKCKNCRECLVEKYCPTFAIKRENG.

This is an uncharacterized protein from Methanocaldococcus jannaschii (strain ATCC 43067 / DSM 2661 / JAL-1 / JCM 10045 / NBRC 100440) (Methanococcus jannaschii).